A 974-amino-acid chain; its full sequence is Probable proton ATPase 1B (974 aa).

The span at 1–23 (MSSKKYELDAAAFEDKPESHSDA) shows a compositional bias: basic and acidic residues. Positions 1–61 (MSSKKYELDA…ATDLLPPSKG (61 aa)) are disordered. The next 4 membrane-spanning stretches (helical) occupy residues 93 to 112 (GLWG…EFAL), 118 to 137 (GAIL…YETI), 265 to 286 (VMLA…YLLA), and 295 to 321 (ALQF…TLAV). The 4-aspartylphosphate intermediate role is filled by Asp351. The next 6 membrane-spanning stretches (helical) occupy residues 631–651 (AAAD…AMLV), 662–684 (FLTY…CFSL), 698–712 (FFHL…ITLL), 738–761 (VVFV…LWIG), 813–840 (FFFY…AASF), and 869–887 (VWIY…KVLA). The segment at 952-974 (REDTHVLNESTSPVNAFSPKVKK) is disordered.

This sequence belongs to the cation transport ATPase (P-type) (TC 3.A.3) family. Type IIIA subfamily.

The protein localises to the membrane. It catalyses the reaction ATP + H2O + H(+)(in) = ADP + phosphate + 2 H(+)(out). This is Probable proton ATPase 1B (H1B) from Leishmania donovani.